The chain runs to 356 residues: Phospho-N-acetylmuramoyl-pentapeptide-transferase (356 aa).

10 helical membrane-spanning segments follow: residues 25–45, 70–90, 93–113, 138–158, 164–184, 195–215, 235–255, 258–278, 284–304, and 333–353; these read TIAA…SIIA, GTPT…AFLW, LSNI…AIGF, FFVA…GFAL, YLIH…VATG, GLAI…AYLC, LAVL…FNAP, AIFM…TVAV, IVLV…VIQV, and QVVI…LSTL.

It belongs to the glycosyltransferase 4 family. MraY subfamily. It depends on Mg(2+) as a cofactor.

The protein localises to the cell inner membrane. It carries out the reaction UDP-N-acetyl-alpha-D-muramoyl-L-alanyl-gamma-D-glutamyl-meso-2,6-diaminopimeloyl-D-alanyl-D-alanine + di-trans,octa-cis-undecaprenyl phosphate = di-trans,octa-cis-undecaprenyl diphospho-N-acetyl-alpha-D-muramoyl-L-alanyl-D-glutamyl-meso-2,6-diaminopimeloyl-D-alanyl-D-alanine + UMP. It functions in the pathway cell wall biogenesis; peptidoglycan biosynthesis. Its function is as follows. Catalyzes the initial step of the lipid cycle reactions in the biosynthesis of the cell wall peptidoglycan: transfers peptidoglycan precursor phospho-MurNAc-pentapeptide from UDP-MurNAc-pentapeptide onto the lipid carrier undecaprenyl phosphate, yielding undecaprenyl-pyrophosphoryl-MurNAc-pentapeptide, known as lipid I. In Bartonella tribocorum (strain CIP 105476 / IBS 506), this protein is Phospho-N-acetylmuramoyl-pentapeptide-transferase.